The sequence spans 214 residues: ATP-dependent Clp protease proteolytic subunit (214 aa).

Ser113 acts as the Nucleophile in catalysis. His138 is a catalytic residue.

It belongs to the peptidase S14 family. Fourteen ClpP subunits assemble into 2 heptameric rings which stack back to back to give a disk-like structure with a central cavity, resembling the structure of eukaryotic proteasomes.

It is found in the cytoplasm. It carries out the reaction Hydrolysis of proteins to small peptides in the presence of ATP and magnesium. alpha-casein is the usual test substrate. In the absence of ATP, only oligopeptides shorter than five residues are hydrolyzed (such as succinyl-Leu-Tyr-|-NHMec, and Leu-Tyr-Leu-|-Tyr-Trp, in which cleavage of the -Tyr-|-Leu- and -Tyr-|-Trp bonds also occurs).. Its function is as follows. Cleaves peptides in various proteins in a process that requires ATP hydrolysis. Has a chymotrypsin-like activity. Plays a major role in the degradation of misfolded proteins. The sequence is that of ATP-dependent Clp protease proteolytic subunit from Alkalilimnicola ehrlichii (strain ATCC BAA-1101 / DSM 17681 / MLHE-1).